The primary structure comprises 146 residues: Small ribosomal subunit protein bS6 (146 aa).

The segment at 94-146 (GPITTPSPMMQEGKSRPPHSSDEDSENTAPAKAKTADSPGEDTRTTEESDPKP) is disordered. 2 stretches are compositionally biased toward basic and acidic residues: residues 106-115 (GKSRPPHSSD) and 134-146 (EDTR…DPKP).

The protein belongs to the bacterial ribosomal protein bS6 family.

Binds together with bS18 to 16S ribosomal RNA. The polypeptide is Small ribosomal subunit protein bS6 (Nitrosomonas europaea (strain ATCC 19718 / CIP 103999 / KCTC 2705 / NBRC 14298)).